We begin with the raw amino-acid sequence, 309 residues long: Carbonic anhydrase 4 (309 aa).

A signal peptide spans 1–17; the sequence is MQLLLALLALAYVAPST. The 263-residue stretch at 20–282 folds into the Alpha-carbonic anhydrase domain; sequence SHWCYEIQAK…LGNRQVFRSH (263 aa). Cystine bridges form between Cys-23–Cys-35 and Cys-45–Cys-226. His-87 serves as the catalytic Proton donor/acceptor. Residues His-114, His-116, and His-139 each coordinate Zn(2+). Residue Asn-193 is glycosylated (N-linked (GlcNAc...) asparagine). 222–223 is a substrate binding site; that stretch reads TT. A lipid anchor (GPI-anchor amidated serine) is attached at Ser-281. A propeptide spans 282–309 (removed in mature form); the sequence is HASGRLLSLPLPTLLVPTLTCLVASFLH.

It belongs to the alpha-carbonic anhydrase family. In terms of assembly, interacts with SLC4A4. Requires Zn(2+) as cofactor. The N-terminus is blocked. Post-translationally, glycosylated. In terms of tissue distribution, present in kidney and lung. Also particularly abundant in brain, muscle, heart and liver. Not detected in skin or spleen.

The protein localises to the cell membrane. It carries out the reaction hydrogencarbonate + H(+) = CO2 + H2O. Inhibited by acetazolamide. Its function is as follows. Catalyzes the reversible hydration of carbon dioxide into bicarbonate and protons and thus is essential to maintaining intracellular and extracellular pH. May stimulate the sodium/bicarbonate transporter activity of SLC4A4 that acts in pH homeostasis. It is essential for acid overload removal from the retina and retina epithelium, and acid release in the choriocapillaris in the choroid. This chain is Carbonic anhydrase 4 (Ca4), found in Rattus norvegicus (Rat).